The primary structure comprises 294 residues: Nucleotide-binding protein lp_0779 (294 aa).

12-19 (GMSGAGKT) provides a ligand contact to ATP. 62-65 (DLRS) lines the GTP pocket.

The protein belongs to the RapZ-like family.

In terms of biological role, displays ATPase and GTPase activities. This chain is Nucleotide-binding protein lp_0779, found in Lactiplantibacillus plantarum (strain ATCC BAA-793 / NCIMB 8826 / WCFS1) (Lactobacillus plantarum).